A 153-amino-acid chain; its full sequence is Deoxyuridine 5'-triphosphate nucleotidohydrolase (153 aa).

Residues 71-73, Asn84, 88-90, and Lys98 contribute to the substrate site; these read RSG and TID.

Belongs to the dUTPase family. Requires Mg(2+) as cofactor.

It carries out the reaction dUTP + H2O = dUMP + diphosphate + H(+). It participates in pyrimidine metabolism; dUMP biosynthesis; dUMP from dCTP (dUTP route): step 2/2. This enzyme is involved in nucleotide metabolism: it produces dUMP, the immediate precursor of thymidine nucleotides and it decreases the intracellular concentration of dUTP so that uracil cannot be incorporated into DNA. The chain is Deoxyuridine 5'-triphosphate nucleotidohydrolase from Wolbachia pipientis wMel.